The primary structure comprises 259 residues: Phosphate import ATP-binding protein PstB (259 aa).

One can recognise an ABC transporter domain in the interval 13 to 254; the sequence is IAVKNLNFFY…PTRKETEDYI (242 aa). Residue 45–52 coordinates ATP; sequence GPSGCGKS.

The protein belongs to the ABC transporter superfamily. Phosphate importer (TC 3.A.1.7) family. As to quaternary structure, the complex is composed of two ATP-binding proteins (PstB), two transmembrane proteins (PstC and PstA) and a solute-binding protein (PstS).

It localises to the cell inner membrane. It catalyses the reaction phosphate(out) + ATP + H2O = ADP + 2 phosphate(in) + H(+). Its function is as follows. Part of the ABC transporter complex PstSACB involved in phosphate import. Responsible for energy coupling to the transport system. This chain is Phosphate import ATP-binding protein PstB, found in Albidiferax ferrireducens (strain ATCC BAA-621 / DSM 15236 / T118) (Rhodoferax ferrireducens).